Consider the following 340-residue polypeptide: DNA-directed RNA polymerase subunit alpha (340 aa).

An alpha N-terminal domain (alpha-NTD) region spans residues 1–233 (MIRDEISVST…DLFIPFLRAE (233 aa)). The alpha C-terminal domain (alpha-CTD) stretch occupies residues 268–340 (AFKHIFIDQS…DLPKNKFQIH (73 aa)).

The protein belongs to the RNA polymerase alpha chain family. In terms of assembly, in plastids the minimal PEP RNA polymerase catalytic core is composed of four subunits: alpha, beta, beta', and beta''. When a (nuclear-encoded) sigma factor is associated with the core the holoenzyme is formed, which can initiate transcription.

Its subcellular location is the plastid. The protein localises to the chloroplast. The catalysed reaction is RNA(n) + a ribonucleoside 5'-triphosphate = RNA(n+1) + diphosphate. DNA-dependent RNA polymerase catalyzes the transcription of DNA into RNA using the four ribonucleoside triphosphates as substrates. The protein is DNA-directed RNA polymerase subunit alpha of Cycas taitungensis (Prince sago).